We begin with the raw amino-acid sequence, 366 residues long: MATFAPHISKITKSSTKFNYGRIAKTFLGVAGSAAIATYFYNNGNPFNNNNNNNNNNGGSKNAAKALFGASAGANVKIAKVPEGKSASDYQKVYNDIATKISENLEFDENAGYYGQLLRLAWHTSGTYDKSDNSGGSYGGTMIFAPEEFDPENAGLQVGREFLMEFLVKYPWISRGDLWTLGGVAAVQESGGPKIEWRPGRVDDNTASKVPPNGRLPDASKDGKYVKDLFARMGFNERETVALLGAHVLGRCHKHNSGYDGPWGPSFNQFTNVFYTTLLGDWHVKKWDGKKQYEDDETGEFMMLPTDMALKEESYFLKYVKMYADDQDLFFKDFAKAFSKLISNGIKYPADSKPILFKTLDEQDEE.

The Proton acceptor role is filled by H123. Over residues 195–206 (IEWRPGRVDDNT) the composition is skewed to basic and acidic residues. The segment at 195 to 218 (IEWRPGRVDDNTASKVPPNGRLPD) is disordered. A heme b-binding site is contributed by H247. W263 (tryptophan radical intermediate) is an active-site residue.

It belongs to the peroxidase family. Cytochrome c peroxidase subfamily. As to quaternary structure, forms a one-to-one complex with cytochrome c. Heme b serves as cofactor.

The protein resides in the mitochondrion matrix. Its subcellular location is the mitochondrion intermembrane space. The catalysed reaction is 2 Fe(II)-[cytochrome c] + H2O2 + 2 H(+) = 2 Fe(III)-[cytochrome c] + 2 H2O. Functionally, destroys radicals which are normally produced within the cells and which are toxic to biological systems. The sequence is that of Cytochrome c peroxidase, mitochondrial (CCP1) from Candida albicans (strain SC5314 / ATCC MYA-2876) (Yeast).